A 269-amino-acid polypeptide reads, in one-letter code: MSPFKIFFFTTLLVAAFSVSAADFNTDVNVAWGNGRGKILNNGQLLTLSLDKSSGSGFQSKTEYLFGKIDMQIKLVPGNSAGTVTTFYLKSEGSTWDEIDFEFLGNMSGDPYTLHTNVYTQGKGDKEQQFHLWFDPTANFHTYSILWNPQRIILTVDDTPIREFKNYESLGVLFPKNKPMRMYASLWNADDWATRGGLVKTDWSKAPFMASYRNIKIDSKPNSNWYTQEMDSTSQARLKWVQKNYMIYNYCTDHRRFPQGAPKECTTSS.

The first 21 residues, 1–21, serve as a signal peptide directing secretion; that stretch reads MSPFKIFFFTTLLVAAFSVSA. The region spanning 22 to 212 is the GH16 domain; it reads ADFNTDVNVA…WSKAPFMASY (191 aa). E98 functions as the Nucleophile in the catalytic mechanism. E102 functions as the Proton donor in the catalytic mechanism. A xyloglucan-binding site is contributed by E102. N106 carries N-linked (GlcNAc...) asparagine glycosylation. Xyloglucan contacts are provided by residues 115–117, 125–127, 191–192, G196, and R256; these read HTN, DKE, and DW. An intrachain disulfide couples C251 to C265.

This sequence belongs to the glycosyl hydrolase 16 family. XTH group 2 subfamily. Post-translationally, contains at least one intrachain disulfide bond essential for its enzymatic activity. In terms of processing, N-glycosylated; essential for its enzymatic activity. In terms of tissue distribution, highly expressed. Predominantly expressed in stems. Expressed in shoot apical meristems, also found in seedlings and meristems.

The protein localises to the secreted. It localises to the cell wall. The protein resides in the extracellular space. It is found in the apoplast. The catalysed reaction is breaks a beta-(1-&gt;4) bond in the backbone of a xyloglucan and transfers the xyloglucanyl segment on to O-4 of the non-reducing terminal glucose residue of an acceptor, which can be a xyloglucan or an oligosaccharide of xyloglucan.. Its function is as follows. Catalyzes xyloglucan endohydrolysis (XEH) and/or endotransglycosylation (XET). Cleaves and religates xyloglucan polymers, an essential constituent of the primary cell wall, and thereby participates in cell wall construction of growing tissues. May be required during development to modify the walls of cells under mechanical stress. The polypeptide is Xyloglucan endotransglucosylase/hydrolase protein 24 (XTH24) (Arabidopsis thaliana (Mouse-ear cress)).